Here is a 205-residue protein sequence, read N- to C-terminus: Purine catabolism protein PucB (205 aa).

It functions in the pathway purine metabolism; hypoxanthine degradation. Functionally, required for xanthine dehydrogenase activity. Could be involved in formation of the molybdenum cofactor required by xanthine dehydrogenase. This is Purine catabolism protein PucB (pucB) from Bacillus subtilis (strain 168).